Here is a 191-residue protein sequence, read N- to C-terminus: Pyridoxal 5'-phosphate synthase subunit PdxT (191 aa).

48-50 (GES) contacts L-glutamine. Cys79 serves as the catalytic Nucleophile. Residues Arg106 and 134-135 (IR) contribute to the L-glutamine site. Active-site charge relay system residues include His170 and Glu172.

This sequence belongs to the glutaminase PdxT/SNO family. As to quaternary structure, in the presence of PdxS, forms a dodecamer of heterodimers. Only shows activity in the heterodimer.

The catalysed reaction is aldehydo-D-ribose 5-phosphate + D-glyceraldehyde 3-phosphate + L-glutamine = pyridoxal 5'-phosphate + L-glutamate + phosphate + 3 H2O + H(+). It catalyses the reaction L-glutamine + H2O = L-glutamate + NH4(+). It participates in cofactor biosynthesis; pyridoxal 5'-phosphate biosynthesis. Catalyzes the hydrolysis of glutamine to glutamate and ammonia as part of the biosynthesis of pyridoxal 5'-phosphate. The resulting ammonia molecule is channeled to the active site of PdxS. The protein is Pyridoxal 5'-phosphate synthase subunit PdxT of Oenococcus oeni (strain ATCC BAA-331 / PSU-1).